The chain runs to 58 residues: MDARLLDILVCPICKGNLEHRKAEKELVCKPCKLAFPIRDDIPIMLEDEARQLTADGQ.

Belongs to the UPF0434 family.

The chain is UPF0434 protein Daro_3207 from Dechloromonas aromatica (strain RCB).